A 33-amino-acid chain; its full sequence is Brevinin-2LT (33 aa).

C27 and C33 are disulfide-bonded.

Expressed by the skin glands.

It is found in the secreted. Has antibacterial activity. The chain is Brevinin-2LT from Rana latastei (Italian agile frog).